Here is a 545-residue protein sequence, read N- to C-terminus: Protein BTN1 (545 aa).

The tract at residues 23–49 (AHSSASDPRRTMVTNTSESPLASRQAT) is disordered. Residues 34-49 (MVTNTSESPLASRQAT) show a composition bias toward polar residues. The next 5 helical transmembrane spans lie at 66-86 (AFFLFGLLNNSLYVVILTAAL), 97-117 (LVSFANIFPALIAKAIWPYFL), 127-147 (VWSCAALSFIGMLLVSFFPAL), 205-225 (VGWFASGTGAAGLIGAAAWWV), and 234-254 (GMAILSVLPAFMIMAYAIILP). The disordered stretch occupies residues 276 to 304 (TEDDAVERSSSDDQPTTANDDRQDSTIHI). 3 helical membrane passes run 322–342 (MALLKPMLQPYIIPLVIVYAM), 408–428 (LLWLPAVLQTGLLAVLLTESL), and 440–460 (LVIVLICVEGLAGGSAYVSVF).

The protein belongs to the battenin family.

Its subcellular location is the vacuole membrane. Involved in vacuolar transport and vacuole pH homeostasis. Also required for cytokinesis. This is Protein BTN1 (BTN1) from Mycosarcoma maydis (Corn smut fungus).